The primary structure comprises 281 residues: Trypsin zeta (281 aa).

The signal sequence occupies residues 1-23 (MSSSSWLGCLLAVLLSALALSQG). Positions 24–39 (LPLLEDLDENSFPDGR) are cleaved as a propeptide — activation peptide. Residues 40–279 (IVGGYVTDIA…LRPWIDAVRA (240 aa)) form the Peptidase S1 domain. The cysteines at positions 73 and 89 are disulfide-linked. Catalysis depends on charge relay system residues histidine 88 and aspartate 135. Intrachain disulfides connect cysteine 199/cysteine 219 and cysteine 231/cysteine 255. Catalysis depends on serine 235, which acts as the Charge relay system.

It belongs to the peptidase S1 family.

Its subcellular location is the secreted. It localises to the extracellular space. It carries out the reaction Preferential cleavage: Arg-|-Xaa, Lys-|-Xaa.. This chain is Trypsin zeta (zetaTry), found in Drosophila erecta (Fruit fly).